Here is a 645-residue protein sequence, read N- to C-terminus: tRNA 5-methylaminomethyl-2-thiouridine biosynthesis bifunctional protein MnmC (645 aa).

Residues methionine 1–aspartate 230 form a tRNA (mnm(5)s(2)U34)-methyltransferase region. An FAD-dependent cmnm(5)s(2)U34 oxidoreductase region spans residues leucine 254–arginine 645.

It in the N-terminal section; belongs to the methyltransferase superfamily. tRNA (mnm(5)s(2)U34)-methyltransferase family. The protein in the C-terminal section; belongs to the DAO family. Requires FAD as cofactor.

The protein resides in the cytoplasm. It catalyses the reaction 5-aminomethyl-2-thiouridine(34) in tRNA + S-adenosyl-L-methionine = 5-methylaminomethyl-2-thiouridine(34) in tRNA + S-adenosyl-L-homocysteine + H(+). In terms of biological role, catalyzes the last two steps in the biosynthesis of 5-methylaminomethyl-2-thiouridine (mnm(5)s(2)U) at the wobble position (U34) in tRNA. Catalyzes the FAD-dependent demodification of cmnm(5)s(2)U34 to nm(5)s(2)U34, followed by the transfer of a methyl group from S-adenosyl-L-methionine to nm(5)s(2)U34, to form mnm(5)s(2)U34. This chain is tRNA 5-methylaminomethyl-2-thiouridine biosynthesis bifunctional protein MnmC, found in Delftia acidovorans (strain DSM 14801 / SPH-1).